The following is a 62-amino-acid chain: Sperm protamine P1 (62 aa).

Residues 1–62 (MARYRHSRSR…RYSRRRRRRY (62 aa)) are disordered.

It belongs to the protamine P1 family. As to expression, testis.

It localises to the nucleus. Its subcellular location is the chromosome. In terms of biological role, protamines substitute for histones in the chromatin of sperm during the haploid phase of spermatogenesis. They compact sperm DNA into a highly condensed, stable and inactive complex. The chain is Sperm protamine P1 (PRM1) from Bettongia penicillata (Brush-tailed bettong).